The primary structure comprises 447 residues: Methylenetetrahydrofolate--tRNA-(uracil-5-)-methyltransferase TrmFO (447 aa).

13–18 is a binding site for FAD; it reads GAGLAG.

Belongs to the MnmG family. TrmFO subfamily. Requires FAD as cofactor.

Its subcellular location is the cytoplasm. It carries out the reaction uridine(54) in tRNA + (6R)-5,10-methylene-5,6,7,8-tetrahydrofolate + NADH + H(+) = 5-methyluridine(54) in tRNA + (6S)-5,6,7,8-tetrahydrofolate + NAD(+). The enzyme catalyses uridine(54) in tRNA + (6R)-5,10-methylene-5,6,7,8-tetrahydrofolate + NADPH + H(+) = 5-methyluridine(54) in tRNA + (6S)-5,6,7,8-tetrahydrofolate + NADP(+). Its function is as follows. Catalyzes the folate-dependent formation of 5-methyl-uridine at position 54 (M-5-U54) in all tRNAs. The chain is Methylenetetrahydrofolate--tRNA-(uracil-5-)-methyltransferase TrmFO from Streptococcus thermophilus (strain CNRZ 1066).